The chain runs to 314 residues: Methionyl-tRNA formyltransferase (314 aa).

Ser109–Pro112 contributes to the (6S)-5,6,7,8-tetrahydrofolate binding site.

It belongs to the Fmt family.

The catalysed reaction is L-methionyl-tRNA(fMet) + (6R)-10-formyltetrahydrofolate = N-formyl-L-methionyl-tRNA(fMet) + (6S)-5,6,7,8-tetrahydrofolate + H(+). Functionally, attaches a formyl group to the free amino group of methionyl-tRNA(fMet). The formyl group appears to play a dual role in the initiator identity of N-formylmethionyl-tRNA by promoting its recognition by IF2 and preventing the misappropriation of this tRNA by the elongation apparatus. The sequence is that of Methionyl-tRNA formyltransferase from Syntrophomonas wolfei subsp. wolfei (strain DSM 2245B / Goettingen).